Here is a 441-residue protein sequence, read N- to C-terminus: UDP-N-acetylglucosamine 1-carboxyvinyltransferase 1 (441 aa).

Residue 42–43 (KN) participates in phosphoenolpyruvate binding. Arginine 117 lines the UDP-N-acetyl-alpha-D-glucosamine pocket. Cysteine 141 serves as the catalytic Proton donor. Cysteine 141 carries the 2-(S-cysteinyl)pyruvic acid O-phosphothioketal modification. Positions 330 and 352 each coordinate UDP-N-acetyl-alpha-D-glucosamine.

Belongs to the EPSP synthase family. MurA subfamily.

The protein localises to the cytoplasm. The catalysed reaction is phosphoenolpyruvate + UDP-N-acetyl-alpha-D-glucosamine = UDP-N-acetyl-3-O-(1-carboxyvinyl)-alpha-D-glucosamine + phosphate. It functions in the pathway cell wall biogenesis; peptidoglycan biosynthesis. Functionally, cell wall formation. Adds enolpyruvyl to UDP-N-acetylglucosamine. This chain is UDP-N-acetylglucosamine 1-carboxyvinyltransferase 1, found in Symbiobacterium thermophilum (strain DSM 24528 / JCM 14929 / IAM 14863 / T).